The following is a 370-amino-acid chain: Protein TEEBE (370 aa).

The first 21 residues, 1-21 (MSLYHSLSIFLLLSLCHGSYS), serve as a signal peptide directing secretion. Asn215 carries N-linked (GlcNAc...) asparagine glycosylation.

Expressed in primary and lateral roots, stigmatic papillae and hypocotyls.

It localises to the secreted. It is found in the cell wall. Functionally, prevents hypocotyl epidermal cells elongation by modulating the pectin status in cell walls. Likely regulates pectin methylesterification degree during cell separation and elongation, including upon root-knot nematode Meloidogyne incognita infection. This chain is Protein TEEBE, found in Arabidopsis thaliana (Mouse-ear cress).